The sequence spans 27 residues: Cupiennin-4b (27 aa).

At Q27 the chain carries Glutamine amide.

Expressed by the venom gland.

It is found in the secreted. This chain is Cupiennin-4b, found in Cupiennius salei (American wandering spider).